Here is a 399-residue protein sequence, read N- to C-terminus: Argininosuccinate synthase (399 aa).

9 to 17 (AYSGGLDTS) provides a ligand contact to ATP. Residue Tyr-85 participates in L-citrulline binding. Position 115 (Gly-115) interacts with ATP. Positions 117, 121, and 122 each coordinate L-aspartate. Asn-121 contributes to the L-citrulline binding site. Residues Arg-125, Ser-173, Glu-258, and Tyr-270 each coordinate L-citrulline.

The protein belongs to the argininosuccinate synthase family. Type 1 subfamily. Homotetramer.

Its subcellular location is the cytoplasm. It carries out the reaction L-citrulline + L-aspartate + ATP = 2-(N(omega)-L-arginino)succinate + AMP + diphosphate + H(+). It participates in amino-acid biosynthesis; L-arginine biosynthesis; L-arginine from L-ornithine and carbamoyl phosphate: step 2/3. This chain is Argininosuccinate synthase, found in Streptococcus thermophilus (strain CNRZ 1066).